A 115-amino-acid polypeptide reads, in one-letter code: MNMLLTMLTNITLSTLLISIAFWLPQLNIYTEKANPYECGFDPMSSARLPFSMKFFLVAITFLLFDLEIALLLPIPWAIQVKDINTMTLTAFILVSILALGLAYEWTQKGLEWTE.

The next 3 membrane-spanning stretches (helical) occupy residues 4-24 (LLTM…AFWL), 55-75 (FFLV…LLPI), and 84-104 (INTM…GLAY).

The protein belongs to the complex I subunit 3 family. In terms of assembly, core subunit of respiratory chain NADH dehydrogenase (Complex I) which is composed of 45 different subunits. Interacts with TMEM186. Interacts with TMEM242.

It localises to the mitochondrion inner membrane. The enzyme catalyses a ubiquinone + NADH + 5 H(+)(in) = a ubiquinol + NAD(+) + 4 H(+)(out). Core subunit of the mitochondrial membrane respiratory chain NADH dehydrogenase (Complex I) which catalyzes electron transfer from NADH through the respiratory chain, using ubiquinone as an electron acceptor. Essential for the catalytic activity of complex I. This Neotoma lepida (Desert woodrat) protein is NADH-ubiquinone oxidoreductase chain 3.